A 134-amino-acid polypeptide reads, in one-letter code: MGGGERYNIPDPQSRNASKNQQQHNRQKTKDQNSQMKIVHKKKERGHGYNPSAVQNGGKTKSLSNNSNWNASLSSPSLLFKSQASQNYAGAKFSEPPSPSVLPKPPSHWVHVSLNPSDKETMTFQLKTLLKVQV.

The segment at 1–74 (MGGGERYNIP…NNSNWNASLS (74 aa)) is disordered. 2 stretches are compositionally biased toward polar residues: residues 11–24 (DPQS…QQQH) and 52–61 (SAVQNGGKTK). The segment covering 62–74 (SLSNNSNWNASLS) has biased composition (low complexity). Residues 94–100 (SEPPSPS) carry the SH3-binding motif.

The protein belongs to the PNRC family. PNRC2 subfamily. As to quaternary structure, interacts with UPF1/RENT1; preferentially interacts with hyperphosphorylated form. Interacts with DCP1A. Interacts with many nuclear receptors including ESR1, ESRRA, ESRRG, NR3C1/GR, NR5A1, PGR, TR, RAR and RXR.

The protein localises to the nucleus. Its subcellular location is the cytoplasm. It is found in the P-body. In terms of biological role, involved in nonsense-mediated mRNA decay (NMD) by acting as a bridge between the mRNA decapping complex and the NMD machinery. May act by targeting the NMD machinery to the P-body and recruiting the decapping machinery to aberrant mRNAs. Required for UPF1/RENT1 localization to the P-body. Plays a role in glucocorticoid receptor-mediated mRNA degradation by interacting with the glucocorticoid receptor NR3C1 in a ligand-dependent manner when it is bound to the 5' UTR of target mRNAs and recruiting the RNA helicase UPF1 and the mRNA-decapping enzyme DCP1A, leading to RNA decay. Also acts as a nuclear receptor coactivator. May play a role in controlling the energy balance between energy storage and energy expenditure. The sequence is that of Proline-rich nuclear receptor coactivator 2 (Pnrc2) from Rattus norvegicus (Rat).